Here is a 92-residue protein sequence, read N- to C-terminus: MGLHYEHQVHLLKDILTDHQLDCCGTVAEYEQLERVIKSLMANTELDSNFKNVLEDVYRYSQSGISSKSIDSHIQEHQNSLSQWVEQMDSYS.

This is an uncharacterized protein from Bacillus subtilis (strain 168).